A 286-amino-acid chain; its full sequence is Peroxisomal membrane protein pex14 (286 aa).

The short motif at Thr-61–Trp-69 is the SH3-binding element. Positions Lys-122 to Gln-214 form a coiled coil. The segment at Lys-218 to Asp-239 is disordered.

It belongs to the peroxin-14 family. Interacts with PEX13 (via SH3 domain); forming the PEX13-PEX14 docking complex. Interacts with PEX5 (via WxxxF/Y motifs).

It is found in the peroxisome membrane. Functionally, component of the PEX13-PEX14 docking complex, a translocon channel that specifically mediates the import of peroxisomal cargo proteins bound to PEX5 receptor. The PEX13-PEX14 docking complex forms a large import pore which can be opened to a diameter of about 9 nm. Mechanistically, PEX5 receptor along with cargo proteins associates with the PEX14 subunit of the PEX13-PEX14 docking complex in the cytosol, leading to the insertion of the receptor into the organelle membrane with the concomitant translocation of the cargo into the peroxisome matrix. This is Peroxisomal membrane protein pex14 (pex14) from Schizosaccharomyces pombe (strain 972 / ATCC 24843) (Fission yeast).